Reading from the N-terminus, the 133-residue chain is Small ribosomal subunit protein uS8 (133 aa).

This sequence belongs to the universal ribosomal protein uS8 family. In terms of assembly, part of the 30S ribosomal subunit. Contacts proteins S5 and S12.

Functionally, one of the primary rRNA binding proteins, it binds directly to 16S rRNA central domain where it helps coordinate assembly of the platform of the 30S subunit. In Salinibacter ruber (strain DSM 13855 / M31), this protein is Small ribosomal subunit protein uS8.